The primary structure comprises 947 residues: Pyruvate, phosphate dikinase 1, chloroplastic (947 aa).

A chloroplast-targeting transit peptide spans 1-71; it reads MPSVSRAVCV…PLRAVAAPIP (71 aa). Residues 39-60 are disordered; it reads RHGKPEVAIRSGSGGSARGGHC. Thr-527 bears the Phosphothreonine; by PDRP1 mark. His-529 functions as the Tele-phosphohistidine intermediate in the catalytic mechanism. Substrate-binding residues include Arg-635, Arg-692, Glu-821, Gly-842, Thr-843, Asn-844, and Asp-845. Glu-821 lines the Mg(2+) pocket. Asp-845 contributes to the Mg(2+) binding site. The active-site Proton donor is Cys-907.

The protein belongs to the PEP-utilizing enzyme family. As to quaternary structure, homotetramer. The cofactor is Mg(2+). Post-translationally, phosphorylation of Thr-527 in the dark inactivates the enzyme. Dephosphorylation upon light stimulation reactivates the enzyme. Phosphorylation increases during the first 20 days post-pollination and then remains constant through the 40-day mature seed stage. Reactivation by dephosphorylation during germination is negligible. In terms of tissue distribution, isoform 1 is only expressed in green leaves. Isoform 2 is found in roots, stems, rachis branches, leaf sheaths, green leaves and spikelets. The non-phosphorylated PPDK in mature seeds is endosperm-localized.

The protein localises to the plastid. It localises to the chloroplast. Its subcellular location is the cytoplasm. It carries out the reaction pyruvate + phosphate + ATP = phosphoenolpyruvate + AMP + diphosphate + H(+). Activated by light-induced dephosphorylation. Inhibited by dark-induced phosphorylation. Both reactions are catalyzed by PDRP1. Functionally, formation of phosphoenolpyruvate. The cytoplasmic isoform supports the biosynthetic processes in the nascent endosperm and provides an efficient mechanism for glycolytic ATP synthesis in oxygen depleted tissues. May be involved in regulating the flux of carbon into starch and fatty acids of seeds and in the remobilization of nitrogen reserves in senescing leaves. This Oryza sativa subsp. japonica (Rice) protein is Pyruvate, phosphate dikinase 1, chloroplastic (PPDK1).